The primary structure comprises 380 residues: MKKPLGKIVASTALLISVAFSSSIASAAEEAKEKYLIGFNEQEAVSEFVEQIEANDDVAILSEEEEVEIELLHEFETIPVLSVELSPEDVDALELDPTISYIEEDAEVTTMAQSVPWGISRVQAPAAHNRGLTGSGVKVAVLDTGISTHPDLNIRGGASFVPGEPSTQDGNGHGTHVAGTIAALNNSIGVLGVAPSAELYAVKVLGASGSGSVSSIAQGLEWAGNNGMHVANLSLGSPSPSATLEQAVNSATSRGVLVVAASGNSGAGSISYPARYANAMAVGATDQNNNRASFSQYGAGLDIVAPGVNVQSTYPGSTYASLNGTSMATPHVAGVAALVKQKNPSWSNVQIRNHLKNTATGLGNTNLYGSGLVNAEAATR.

The N-terminal stretch at 1–27 is a signal peptide; that stretch reads MKKPLGKIVASTALLISVAFSSSIASA. Positions 28-111 are excised as a propeptide; the sequence is AEEAKEKYLI…IEEDAEVTTM (84 aa). An Inhibitor I9 domain is found at 34 to 111; sequence KYLIGFNEQE…IEEDAEVTTM (78 aa). Gln113 is a binding site for Ca(2+). Positions 116-379 constitute a Peptidase S8 domain; that stretch reads PWGISRVQAP…SGLVNAEAAT (264 aa). The Charge relay system role is filled by Asp143. Residue Asp151 coordinates Ca(2+). Residue His173 is the Charge relay system of the active site. Ca(2+)-binding residues include Leu184, Asn186, Ile188, Val190, Ala274, Tyr276, Ala279, and Asp302. The Charge relay system role is filled by Ser326.

It belongs to the peptidase S8 family. In terms of assembly, monomer. It depends on Ca(2+) as a cofactor.

The protein localises to the secreted. Its activity is regulated as follows. Activity is inhibited by phenylmethylsulfonyl fluoride and chymostatin. Alkaline serine protease that cleaves various substrates, including N-succinyl-Ala-Ala-Pro-Phe-pNA, N-succinyl-Ala-Ala-Pro-MetpNA, oxidized insulin B chain, casein, hemoglobin and scleroproteins, such as keratin, alpha-keratin and elastin. This is M-protease (aprE) from Shouchella clausii (strain KSM-K16) (Alkalihalobacillus clausii).